We begin with the raw amino-acid sequence, 564 residues long: R-linalool synthase (564 aa).

Positions 320, 324, 464, 468, and 472 each coordinate Mg(2+). The short motif at 320-324 is the DDXXD motif element; the sequence is DDVYD.

It belongs to the terpene synthase family. Mg(2+) is required as a cofactor. Mn(2+) serves as cofactor.

It catalyses the reaction (2E)-geranyl diphosphate + H2O = (R)-linalool + diphosphate. Functionally, specifically catalyzes production of (R)-(-)-linalool, the main component of lavender essential oil. The polypeptide is R-linalool synthase (Lavandula angustifolia (Lavender)).